A 224-amino-acid polypeptide reads, in one-letter code: UPF0758 protein VFMJ11_0123 (224 aa).

Positions 102–224 (ALTSPEHTKR…IVSFAERGWI (123 aa)) constitute an MPN domain. Zn(2+) contacts are provided by His173, His175, and Asp186. The JAMM motif motif lies at 173–186 (HNHPSGVAEPSQAD).

This sequence belongs to the UPF0758 family.

This chain is UPF0758 protein VFMJ11_0123, found in Aliivibrio fischeri (strain MJ11) (Vibrio fischeri).